We begin with the raw amino-acid sequence, 142 residues long: Phosphoribosyl-AMP cyclohydrolase (142 aa).

Aspartate 85 serves as a coordination point for Mg(2+). Residue cysteine 86 coordinates Zn(2+). Mg(2+)-binding residues include aspartate 87 and aspartate 89. Residues cysteine 102 and cysteine 109 each coordinate Zn(2+). Residues 120–142 (GEPPTPVGAGERQPASGTADAAP) are disordered.

It belongs to the PRA-CH family. In terms of assembly, homodimer. It depends on Mg(2+) as a cofactor. Requires Zn(2+) as cofactor.

The protein localises to the cytoplasm. It catalyses the reaction 1-(5-phospho-beta-D-ribosyl)-5'-AMP + H2O = 1-(5-phospho-beta-D-ribosyl)-5-[(5-phospho-beta-D-ribosylamino)methylideneamino]imidazole-4-carboxamide. The protein operates within amino-acid biosynthesis; L-histidine biosynthesis; L-histidine from 5-phospho-alpha-D-ribose 1-diphosphate: step 3/9. Functionally, catalyzes the hydrolysis of the adenine ring of phosphoribosyl-AMP. The chain is Phosphoribosyl-AMP cyclohydrolase from Acidothermus cellulolyticus (strain ATCC 43068 / DSM 8971 / 11B).